Consider the following 20-residue polypeptide: Elongation factor Tu (20 aa).

This sequence belongs to the GTP-binding elongation factor family. EF-Tu/EF-1A subfamily. Monomer.

The protein resides in the cytoplasm. This protein promotes the GTP-dependent binding of aminoacyl-tRNA to the A-site of ribosomes during protein biosynthesis. The polypeptide is Elongation factor Tu (tuf) (Mycoplasmopsis synoviae (Mycoplasma synoviae)).